A 112-amino-acid polypeptide reads, in one-letter code: Nitrogen regulatory protein P-II (112 aa).

An O-UMP-tyrosine modification is found at Y51.

The protein belongs to the P(II) protein family. In terms of assembly, homotrimer. Post-translationally, uridylylated/deuridylylated by GlnD.

P-II indirectly controls the transcription of the glutamine synthetase gene (GlnA). P-II prevents NR-II-catalyzed conversion of NR-I to NR-I-phosphate, the transcriptional activator of GlnA. When P-II is uridylylated to P-II-UMP, these events are reversed. When the ratio of Gln to 2-ketoglutarate decreases, P-II is uridylylated to P-II-UMP, which causes the deadenylation of glutamine synthetase by GlnE, so activating the enzyme. The chain is Nitrogen regulatory protein P-II (glnB) from Haemophilus influenzae (strain ATCC 51907 / DSM 11121 / KW20 / Rd).